The following is a 185-amino-acid chain: Probable RNA 2'-phosphotransferase (185 aa).

This sequence belongs to the KptA/TPT1 family.

Its function is as follows. Removes the 2'-phosphate from RNA via an intermediate in which the phosphate is ADP-ribosylated by NAD followed by a presumed transesterification to release the RNA and generate ADP-ribose 1''-2''-cyclic phosphate (APPR&gt;P). May function as an ADP-ribosylase. The protein is Probable RNA 2'-phosphotransferase of Rhizobium rhizogenes (strain K84 / ATCC BAA-868) (Agrobacterium radiobacter).